The primary structure comprises 629 residues: uncharacterized protein (629 aa).

Histidine 562 serves as the catalytic Proton acceptor.

The protein belongs to the GMC oxidoreductase family. The cofactor is FAD.

This is an uncharacterized protein from Mycobacterium tuberculosis (strain CDC 1551 / Oshkosh).